Reading from the N-terminus, the 324-residue chain is Beta-ketoacyl-[acyl-carrier-protein] synthase III (324 aa).

Residues C112 and H249 contribute to the active site. Residues 250 to 254 (QANRR) are ACP-binding. N279 is a catalytic residue.

This sequence belongs to the thiolase-like superfamily. FabH family. As to quaternary structure, homodimer.

It localises to the cytoplasm. The enzyme catalyses malonyl-[ACP] + acetyl-CoA + H(+) = 3-oxobutanoyl-[ACP] + CO2 + CoA. It functions in the pathway lipid metabolism; fatty acid biosynthesis. Its function is as follows. Catalyzes the condensation reaction of fatty acid synthesis by the addition to an acyl acceptor of two carbons from malonyl-ACP. Catalyzes the first condensation reaction which initiates fatty acid synthesis and may therefore play a role in governing the total rate of fatty acid production. Possesses both acetoacetyl-ACP synthase and acetyl transacylase activities. Its substrate specificity determines the biosynthesis of branched-chain and/or straight-chain of fatty acids. The polypeptide is Beta-ketoacyl-[acyl-carrier-protein] synthase III (Streptococcus pyogenes serotype M1).